The following is a 423-amino-acid chain: Putative competence-damage inducible protein (423 aa).

It belongs to the CinA family.

This is Putative competence-damage inducible protein from Streptococcus pyogenes serotype M49 (strain NZ131).